Reading from the N-terminus, the 272-residue chain is Phosphate import ATP-binding protein PstB (272 aa).

The ABC transporter domain maps to 26-267 (LEIRNLDLSY…PRKRKTEDYI (242 aa)). Residue 58–65 (GPSGCGKS) participates in ATP binding.

Belongs to the ABC transporter superfamily. Phosphate importer (TC 3.A.1.7) family. In terms of assembly, the complex is composed of two ATP-binding proteins (PstB), two transmembrane proteins (PstC and PstA) and a solute-binding protein (PstS).

It localises to the cell inner membrane. It catalyses the reaction phosphate(out) + ATP + H2O = ADP + 2 phosphate(in) + H(+). Its function is as follows. Part of the ABC transporter complex PstSACB involved in phosphate import. Responsible for energy coupling to the transport system. The protein is Phosphate import ATP-binding protein PstB of Shewanella denitrificans (strain OS217 / ATCC BAA-1090 / DSM 15013).